The sequence spans 447 residues: Phosphoglucosamine mutase (447 aa).

Ser-102 acts as the Phosphoserine intermediate in catalysis. 4 residues coordinate Mg(2+): Ser-102, Asp-241, Asp-243, and Asp-245. At Ser-102 the chain carries Phosphoserine.

The protein belongs to the phosphohexose mutase family. Requires Mg(2+) as cofactor. Activated by phosphorylation.

It carries out the reaction alpha-D-glucosamine 1-phosphate = D-glucosamine 6-phosphate. In terms of biological role, catalyzes the conversion of glucosamine-6-phosphate to glucosamine-1-phosphate. This is Phosphoglucosamine mutase from Symbiobacterium thermophilum (strain DSM 24528 / JCM 14929 / IAM 14863 / T).